The sequence spans 258 residues: Alcohol dehydrogenase 2 (258 aa).

9–33 lines the NAD(+) pocket; that stretch reads IFVGGLGFIGYEACKQLMAKNMASF. S137 is a binding site for substrate. The active-site Proton acceptor is Y150.

Belongs to the short-chain dehydrogenases/reductases (SDR) family. Homodimer.

It carries out the reaction a primary alcohol + NAD(+) = an aldehyde + NADH + H(+). It catalyses the reaction a secondary alcohol + NAD(+) = a ketone + NADH + H(+). The polypeptide is Alcohol dehydrogenase 2 (ADH2) (Ceratitis capitata (Mediterranean fruit fly)).